An 818-amino-acid chain; its full sequence is MSIGRAVNFNSTVLPVLPLRDVVIFPNIMLPLFVGREKSVHALEYAISSSSHQNEIFLIAQKDGSIDNPEPENLYEVGVLANIIQPLIKLPDNAVKVMIHGVRRGRVIEYISSHTLLQARVALDGHYEYGENEDNIDLEALRRSVIDAFDNWCKLSKKSRPEIIIDPIDQVKEVNQIVDMIASHLNIKVSDKQNILEVYNPKERLKKVFALIEREISILSAQNRLYKTIKSQVESTQKVYYLNEQLKAIQKELGEFENGDEGNILNEFEKKINETKLSEEAKEKAITDLKRYKKMNPISPEATVISSYLHWLLDLPWGKYKDAKINLNAAKKILDENHYGIEKVKDRIIEFLAVLKRVKEIKGPILCLVGPPGVGKTSLAKSMAKAVGRDFVRISLGGIRDESEIRGHRKTYIGSMPGKIIQHMKKANSCNPLFLLDEIDKMGSDSRGDPASALLEVLDTEHNKHFTDHYLEVEFDLSSVMFVATANSLNLPHPLRDRMEIIQLSGYTEDEKISIATHHLIPKLKKEHGLHQKEWEITNEALYELIRLYTRESGVRSMERELAKLMRKAVKAILTDKNKKISVETGNLQDYLGVRKYTFGIAENESLVGIVTGLAYTETGGDILMIESVLIPGKGEIKYTGKLGEVMQESIKAAYSYVRSNCLFFGIKPEKFQNNDIHLHVPEGAVPKDGPSAGSAVCTSIVSLMTNIPVNKSVAMTGEVTLRGRVLAIGGLREKLLAALRGSIKTVIIPSENEKDMQEIPANIKEEINVIFAENIDEVIKVALMHPITSIDDNNEISVSTSIENKDNTFPSSETLKH.

Residues 14 to 216 (LPVLPLRDVV…KVFALIEREI (203 aa)) enclose the Lon N-terminal domain. 370–377 (GPPGVGKT) contributes to the ATP binding site. Residues 605–786 (ESLVGIVTGL…DEVIKVALMH (182 aa)) form the Lon proteolytic domain. Residues S692 and K735 contribute to the active site.

This sequence belongs to the peptidase S16 family. Homohexamer. Organized in a ring with a central cavity.

It localises to the cytoplasm. The enzyme catalyses Hydrolysis of proteins in presence of ATP.. In terms of biological role, ATP-dependent serine protease that mediates the selective degradation of mutant and abnormal proteins as well as certain short-lived regulatory proteins. Required for cellular homeostasis and for survival from DNA damage and developmental changes induced by stress. Degrades polypeptides processively to yield small peptide fragments that are 5 to 10 amino acids long. Binds to DNA in a double-stranded, site-specific manner. This Wolbachia pipientis subsp. Culex pipiens (strain wPip) protein is Lon protease.